Consider the following 126-residue polypeptide: Fluoride-specific ion channel FluC (126 aa).

4 helical membrane-spanning segments follow: residues I5–W25, W34–F54, L67–V87, and F95–A115. G74 and T77 together coordinate Na(+).

The protein belongs to the fluoride channel Fluc/FEX (TC 1.A.43) family.

The protein localises to the cell inner membrane. It carries out the reaction fluoride(in) = fluoride(out). Na(+) is not transported, but it plays an essential structural role and its presence is essential for fluoride channel function. In terms of biological role, fluoride-specific ion channel. Important for reducing fluoride concentration in the cell, thus reducing its toxicity. In Paracidovorax citrulli (strain AAC00-1) (Acidovorax citrulli), this protein is Fluoride-specific ion channel FluC.